The following is a 366-amino-acid chain: MRFVDEARIQVRAGKGGHGCLSFRREKFVPRGGPDGGNGGDGGSVYLRADNRLLSLYDFRLKRLYEAQNGRPGEGSQCDGRKGENLVLNLPVGTLVYAEGPEGEVLVADLSEPDAEVLVASGGRGGKGNEHFKSSTMRAPRFSQPGEPGEEFNLRLELKILADAGLIGLPNAGKSTFISQVSAARPKIAAYPFTTLTPNLGVMIDEVDPDRRMVIADIPGLIEGAHEGQGLGLRFLKHVERTRFLVHILSIEDVGDEDPWAGFSLVNEELRRFDAELGERRQIEVVNKIDLVSPERLEALKERARADGREVYFISARDDLGLEPLVQELWQVCESTARNEPIVRLEGLTDVEEEEFPEIEVIYTRE.

One can recognise an Obg domain in the interval Met1–Leu161. Positions Ser121–Pro148 are disordered. An OBG-type G domain is found at Ala162–Glu334. Residues Gly168–Ser175, Phe193–Thr197, Asp217–Gly220, Asn287–Asp290, and Ser315–Arg317 each bind GTP. Ser175 and Thr195 together coordinate Mg(2+).

Belongs to the TRAFAC class OBG-HflX-like GTPase superfamily. OBG GTPase family. As to quaternary structure, monomer. Mg(2+) serves as cofactor.

Its subcellular location is the cytoplasm. Functionally, an essential GTPase which binds GTP, GDP and possibly (p)ppGpp with moderate affinity, with high nucleotide exchange rates and a fairly low GTP hydrolysis rate. Plays a role in control of the cell cycle, stress response, ribosome biogenesis and in those bacteria that undergo differentiation, in morphogenesis control. In Desulfovibrio desulfuricans (strain ATCC 27774 / DSM 6949 / MB), this protein is GTPase Obg.